The primary structure comprises 356 residues: Chorismate synthase (356 aa).

NADP(+)-binding residues include arginine 48 and arginine 54. FMN-binding positions include 125 to 127, 237 to 238, glycine 282, 297 to 301, and arginine 323; these read RSS, NA, and KPTSS.

This sequence belongs to the chorismate synthase family. As to quaternary structure, homotetramer. The cofactor is FMNH2.

The catalysed reaction is 5-O-(1-carboxyvinyl)-3-phosphoshikimate = chorismate + phosphate. Its pathway is metabolic intermediate biosynthesis; chorismate biosynthesis; chorismate from D-erythrose 4-phosphate and phosphoenolpyruvate: step 7/7. Catalyzes the anti-1,4-elimination of the C-3 phosphate and the C-6 proR hydrogen from 5-enolpyruvylshikimate-3-phosphate (EPSP) to yield chorismate, which is the branch point compound that serves as the starting substrate for the three terminal pathways of aromatic amino acid biosynthesis. This reaction introduces a second double bond into the aromatic ring system. The polypeptide is Chorismate synthase (Rhizorhabdus wittichii (strain DSM 6014 / CCUG 31198 / JCM 15750 / NBRC 105917 / EY 4224 / RW1) (Sphingomonas wittichii)).